We begin with the raw amino-acid sequence, 599 residues long: Elongation factor 4 (599 aa).

A tr-type G domain is found at 2–184 (KNIRNFSIIA…RLVRDIPPPE (183 aa)). Residues 14–19 (DHGKST) and 131–134 (NKID) contribute to the GTP site.

The protein belongs to the TRAFAC class translation factor GTPase superfamily. Classic translation factor GTPase family. LepA subfamily.

The protein resides in the cell inner membrane. It carries out the reaction GTP + H2O = GDP + phosphate + H(+). Required for accurate and efficient protein synthesis under certain stress conditions. May act as a fidelity factor of the translation reaction, by catalyzing a one-codon backward translocation of tRNAs on improperly translocated ribosomes. Back-translocation proceeds from a post-translocation (POST) complex to a pre-translocation (PRE) complex, thus giving elongation factor G a second chance to translocate the tRNAs correctly. Binds to ribosomes in a GTP-dependent manner. The chain is Elongation factor 4 from Klebsiella pneumoniae subsp. pneumoniae (strain ATCC 700721 / MGH 78578).